We begin with the raw amino-acid sequence, 645 residues long: Zinc finger and SCAN domain-containing protein 2 (645 aa).

3 disordered regions span residues 1–25 (MMAA…EEDR), 37–75 (DDSW…GPQG), and 193–230 (EMPE…HGEV). One can recognise an SCAN box domain in the interval 59-132 (SAGKGSPQEE…ALVEDLTQTL (74 aa)). Residues 199 to 214 (SAQHSDGESDFERDAG) are compositionally biased toward basic and acidic residues. C2H2-type zinc fingers lie at residues 253 to 275 (YECP…ERTH), 281 to 303 (YKCD…QTTH), 309 to 331 (YKCR…QRIH), 337 to 359 (FQCA…QRTH), 365 to 387 (YSCP…QGIH), 393 to 415 (YECK…QRIH), 421 to 443 (YKCT…RRTH), 449 to 471 (YQCS…RRTH), 477 to 499 (YKCG…QGMH), 505 to 527 (YECL…QRIH), 533 to 555 (YKCS…QQTH), 561 to 583 (YKCL…QRAH), 589 to 611 (YRCP…QRIH), and 617 to 639 (YKCP…QRTH).

Belongs to the krueppel C2H2-type zinc-finger protein family.

Its subcellular location is the nucleus. In terms of biological role, may be involved in transcriptional regulation during the post-meiotic stages of spermatogenesis. The sequence is that of Zinc finger and SCAN domain-containing protein 2 (ZSCAN2) from Pongo abelii (Sumatran orangutan).